A 104-amino-acid polypeptide reads, in one-letter code: Flagellar hook-basal body complex protein FliE (104 aa).

The protein belongs to the FliE family.

The protein resides in the bacterial flagellum basal body. The chain is Flagellar hook-basal body complex protein FliE from Escherichia coli O139:H28 (strain E24377A / ETEC).